A 318-amino-acid polypeptide reads, in one-letter code: NADH-ubiquinone oxidoreductase chain 1 (318 aa).

Transmembrane regions (helical) follow at residues 2–22 (PMANLLLLIVPILIAMAFLML), 68–88 (ITLYITAPTLALTIALLLWTP), 100–120 (LGLLFILATSSLAVYSILWSG), 146–166 (LAIILLSTLLMSGSFNLSTLI), 171–191 (HLWLLLPSWPLAMMWFISTLA), 231–251 (IIMMNTLTTTIFLGTTYDALS), 253–273 (ELYTTYFVTKTLLLTSLFLWI), and 294–314 (LPLTLALLMWYVSMPITISSI).

This sequence belongs to the complex I subunit 1 family. As to quaternary structure, core subunit of respiratory chain NADH dehydrogenase (Complex I) which is composed of 45 different subunits.

It is found in the mitochondrion inner membrane. The catalysed reaction is a ubiquinone + NADH + 5 H(+)(in) = a ubiquinol + NAD(+) + 4 H(+)(out). In terms of biological role, core subunit of the mitochondrial membrane respiratory chain NADH dehydrogenase (Complex I) which catalyzes electron transfer from NADH through the respiratory chain, using ubiquinone as an electron acceptor. Essential for the catalytic activity and assembly of complex I. The protein is NADH-ubiquinone oxidoreductase chain 1 (MT-ND1) of Homo sapiens (Human).